A 1982-amino-acid polypeptide reads, in one-letter code: CASP8-associated protein 2 (1982 aa).

At Ala2 the chain carries N-acetylalanine. Ser20 is modified (phosphoserine). Positions 159-191 are enriched in basic and acidic residues; sequence VKTKDLKSRSPHLDDCSKTDHRAKSDVSKDVHH. A disordered region spans residues 159–552; it reads VKTKDLKSRS…ESGPNETKNK (394 aa). Residue Ser194 is modified to Phosphoserine. The span at 198–210 shows a compositional bias: basic and acidic residues; the sequence is LEKEGKPHSDKRS. Over residues 225–240 the composition is skewed to polar residues; sequence GVWSRSHYQVGEGSSN. Residues 286-395 are compositionally biased toward basic and acidic residues; the sequence is GHPEKYGKGE…ERASLPHSKN (110 aa). Over residues 396–405 the composition is skewed to polar residues; the sequence is EITFSHNSSK. Composition is skewed to basic and acidic residues over residues 406–423, 444–455, and 463–524; these read YHLE…DKSV, KNIDSKEVDAMH, and KAER…KGEV. Ser567 is modified (phosphoserine). The tract at residues 569 to 593 is disordered; sequence AKKQPVSQDNQHKITDIPKSSGVCD. Ser658, Ser815, and Ser875 each carry phosphoserine. 3 disordered regions span residues 875–1017, 1157–1188, and 1251–1283; these read SPPQ…DKVM, FGRD…DNSN, and ERSL…HATL. The segment covering 894–904 has biased composition (polar residues); the sequence is SAHSTSKSQSD. Basic and acidic residues-rich tracts occupy residues 905 to 924, 936 to 965, 999 to 1016, and 1157 to 1170; these read LNKE…EADT, GEIR…DVRK, KRPD…KDKV, and FGRD…EKTS. Ser940 carries the post-translational modification Phosphoserine. Ser1161 carries the post-translational modification Phosphoserine. Polar residues-rich tracts occupy residues 1171 to 1181 and 1269 to 1281; these read KQNAQYSNSQK and GSSI…SQHA. Lys1343 carries the post-translational modification N6-acetyllysine. Positions 1683–1687 match the SUMO interaction motif 1 (SIM); mediates the binding to polysumoylated substrates motif; sequence YVDLT. The NCOA2-binding stretch occupies residues 1709–1982; sequence DQLGCSGGNL…MKLFEKSKCR (274 aa). The SUMO interaction motif 2 (SIM); mediates the binding to polysumoylated substrates motif lies at 1737–1741; it reads FIDLT. Positions 1794 to 1798 match the SUMO interaction motif 3 (SIM); mediates the binding to polysumoylated substrates motif; it reads YIDLT. A disordered region spans residues 1803–1909; that stretch reads SSCEVKKDEL…IKDSSAALAT (107 aa). Positions 1851-1865 are enriched in basic and acidic residues; sequence KETDLTNKEKTKKPT.

As to quaternary structure, self-associates. Component of the death-inducing signaling complex (DISC) with CASP8, FADD and FAS. Interacts with NCOA2 and NCOA3. Interacts with SRRT. Interacts with TRAF2. Interacts with NPAT. Interacts (via SIM domains) with SUMO1 and SUMO2. Interacts with SP100; may negatively regulate CASP8AP2 export from the nucleus to the cytoplasm.

Its subcellular location is the cytoplasm. It localises to the nucleus. The protein localises to the PML body. It is found in the mitochondrion. Functionally, participates in TNF-alpha-induced blockade of glucocorticoid receptor (GR) transactivation at the nuclear receptor coactivator level, upstream and independently of NF-kappa-B. Suppresses both NCOA2- and NCOA3-induced enhancement of GR transactivation. Involved in TNF-alpha-induced activation of NF-kappa-B via a TRAF2-dependent pathway. Acts as a downstream mediator for CASP8-induced activation of NF-kappa-B. Required for the activation of CASP8 in FAS-mediated apoptosis. Required for histone gene transcription and progression through S phase. This is CASP8-associated protein 2 from Homo sapiens (Human).